The following is a 1471-amino-acid chain: Myosin-51 (1471 aa).

The 55-residue stretch at 7–61 (SVGSECWVSNNNGHWDAARLIEIKDNGGGKVVATVAKSSGVLETVNYQQLQNRNI) folds into the Myosin N-terminal SH3-like domain. The region spanning 65-749 (ESPSDLTNLP…VIGNFEEAHR (685 aa)) is the Myosin motor domain. Residue 159–166 (GESGAGKT) coordinates ATP. Positions 628–650 (LSQLMTTVSSTNVHYIRCIKPNE) are actin-binding. IQ domains are found at residues 753-773 (SKST…KEYQ), 776-796 (VKFI…QRFE), 801-821 (ERAA…KRYL), 824-844 (IKCA…SRYI), 849-869 (ESSA…KTFR), and 872-892 (KKSV…RYLR). Residues 909–952 (KNLQASITEVSKQLKSNSKKVTVLRNKLNILNNSLSKWKCLIKK) are a coiled coil. One can recognise a Dilute domain in the interval 1171 to 1417 (EKPLQAVLYW…SKAVEALSCK (247 aa)).

It belongs to the TRAFAC class myosin-kinesin ATPase superfamily. Myosin family.

Its subcellular location is the cytoplasm. In terms of biological role, involved in cytokinesis. The sequence is that of Myosin-51 (myo51) from Schizosaccharomyces pombe (strain 972 / ATCC 24843) (Fission yeast).